A 277-amino-acid polypeptide reads, in one-letter code: Glutamate racemase (277 aa).

Substrate contacts are provided by residues 9-10 (DS) and 41-42 (YG). The active-site Proton donor/acceptor is the C73. Substrate is bound at residue 74 to 75 (NT). Catalysis depends on C183, which acts as the Proton donor/acceptor. 184 to 185 (TH) provides a ligand contact to substrate.

The protein belongs to the aspartate/glutamate racemases family.

It carries out the reaction L-glutamate = D-glutamate. Its pathway is cell wall biogenesis; peptidoglycan biosynthesis. In terms of biological role, provides the (R)-glutamate required for cell wall biosynthesis. This is Glutamate racemase from Shewanella denitrificans (strain OS217 / ATCC BAA-1090 / DSM 15013).